A 252-amino-acid polypeptide reads, in one-letter code: Hydroxyacylglutathione hydrolase (252 aa).

Zn(2+) contacts are provided by H54, H56, D58, H59, H113, D132, and H170.

Belongs to the metallo-beta-lactamase superfamily. Glyoxalase II family. As to quaternary structure, monomer. Zn(2+) is required as a cofactor.

It catalyses the reaction an S-(2-hydroxyacyl)glutathione + H2O = a 2-hydroxy carboxylate + glutathione + H(+). It functions in the pathway secondary metabolite metabolism; methylglyoxal degradation; (R)-lactate from methylglyoxal: step 2/2. In terms of biological role, thiolesterase that catalyzes the hydrolysis of S-D-lactoyl-glutathione to form glutathione and D-lactic acid. This Synechococcus sp. (strain JA-3-3Ab) (Cyanobacteria bacterium Yellowstone A-Prime) protein is Hydroxyacylglutathione hydrolase.